The chain runs to 508 residues: Steroid 17-alpha-hydroxylase/17,20 lyase (508 aa).

Asn202 contacts substrate. Position 442 (Cys442) interacts with heme.

It belongs to the cytochrome P450 family. The cofactor is heme.

It localises to the endoplasmic reticulum membrane. The protein resides in the microsome membrane. It carries out the reaction a C21-steroid + reduced [NADPH--hemoprotein reductase] + O2 = a 17alpha-hydroxy-C21-steroid + oxidized [NADPH--hemoprotein reductase] + H2O + H(+). The enzyme catalyses progesterone + reduced [NADPH--hemoprotein reductase] + O2 = 17alpha-hydroxyprogesterone + oxidized [NADPH--hemoprotein reductase] + H2O + H(+). It catalyses the reaction pregnenolone + reduced [NADPH--hemoprotein reductase] + O2 = 17alpha-hydroxypregnenolone + oxidized [NADPH--hemoprotein reductase] + H2O + H(+). The catalysed reaction is 17alpha-hydroxyprogesterone + reduced [NADPH--hemoprotein reductase] + O2 = androst-4-ene-3,17-dione + acetate + oxidized [NADPH--hemoprotein reductase] + H2O + 2 H(+). It carries out the reaction 17alpha-hydroxyprogesterone + reduced [NADPH--hemoprotein reductase] + O2 = 16alpha,17alpha-dihydroxyprogesterone + oxidized [NADPH--hemoprotein reductase] + H2O + H(+). The enzyme catalyses 16alpha,17alpha-dihydroxyprogesterone + reduced [NADPH--hemoprotein reductase] + O2 = 6beta,16alpha,17alpha-trihydroxyprogesterone + oxidized [NADPH--hemoprotein reductase] + H2O + H(+). It catalyses the reaction 17alpha-hydroxypregnenolone + reduced [NADPH--hemoprotein reductase] + O2 = 3beta-hydroxyandrost-5-en-17-one + acetate + oxidized [NADPH--hemoprotein reductase] + H2O + 2 H(+). The catalysed reaction is 16alpha,17alpha-dihydroxypregnenolone + reduced [NADPH--hemoprotein reductase] + O2 = 3beta,16alpha-dihydroxy-androst-5-en-17-one + acetate + oxidized [NADPH--hemoprotein reductase] + H2O + 2 H(+). It carries out the reaction 3beta-hydroxyandrost-5-en-17-one + reduced [NADPH--hemoprotein reductase] + O2 = 3beta,16alpha-dihydroxy-androst-5-en-17-one + oxidized [NADPH--hemoprotein reductase] + H2O + H(+). The enzyme catalyses androst-4-ene-3,17-dione + reduced [NADPH--hemoprotein reductase] + O2 = 16alpha-hydroxyandrost-4-ene-3,17-dione + oxidized [NADPH--hemoprotein reductase] + H2O + H(+). The protein operates within steroid hormone biosynthesis. Its pathway is steroid biosynthesis; glucocorticoid biosynthesis. Regulated predominantly by intracellular cAMP levels. The 17,20-lyase activity is stimulated by cytochrome b5, which acts as an allosteric effector increasing the Vmax of the lyase activity. Its function is as follows. A cytochrome P450 monooxygenase involved in corticoid and androgen biosynthesis. Catalyzes 17-alpha hydroxylation of C21 steroids, which is common for both pathways. A second oxidative step, required only for androgen synthesis, involves an acyl-carbon cleavage. The 17-alpha hydroxy intermediates, as part of adrenal glucocorticoids biosynthesis pathway, are precursors of cortisol. Hydroxylates steroid hormones, pregnenolone and progesterone to form 17-alpha hydroxy metabolites, followed by the cleavage of the C17-C20 bond to form C19 steroids, dehydroepiandrosterone (DHEA) and androstenedione. Has 16-alpha hydroxylase activity. Catalyzes 16-alpha hydroxylation of 17-alpha hydroxy pregnenolone, followed by the cleavage of the C17-C20 bond to form 16-alpha-hydroxy DHEA. Also 16-alpha hydroxylates androgens, relevant for estriol synthesis. Mechanistically, uses molecular oxygen inserting one oxygen atom into a substrate, and reducing the second into a water molecule, with two electrons provided by NADPH via cytochrome P450 reductase (CPR; NADPH-ferrihemoprotein reductase). The chain is Steroid 17-alpha-hydroxylase/17,20 lyase (CYP17A1) from Felis catus (Cat).